We begin with the raw amino-acid sequence, 467 residues long: UDP-N-acetylmuramate--L-alanine ligase (467 aa).

114-120 (GTHGKTT) provides a ligand contact to ATP.

It belongs to the MurCDEF family.

It localises to the cytoplasm. The enzyme catalyses UDP-N-acetyl-alpha-D-muramate + L-alanine + ATP = UDP-N-acetyl-alpha-D-muramoyl-L-alanine + ADP + phosphate + H(+). It functions in the pathway cell wall biogenesis; peptidoglycan biosynthesis. In terms of biological role, cell wall formation. The chain is UDP-N-acetylmuramate--L-alanine ligase from Rhodopseudomonas palustris (strain TIE-1).